The chain runs to 186 residues: Large ribosomal subunit protein uL5 (186 aa).

It belongs to the universal ribosomal protein uL5 family. In terms of assembly, part of the 50S ribosomal subunit; part of the 5S rRNA/L5/L18/L25 subcomplex. Contacts the 5S rRNA and the P site tRNA. Forms a bridge to the 30S subunit in the 70S ribosome.

Its function is as follows. This is one of the proteins that bind and probably mediate the attachment of the 5S RNA into the large ribosomal subunit, where it forms part of the central protuberance. In the 70S ribosome it contacts protein S13 of the 30S subunit (bridge B1b), connecting the 2 subunits; this bridge is implicated in subunit movement. Contacts the P site tRNA; the 5S rRNA and some of its associated proteins might help stabilize positioning of ribosome-bound tRNAs. This Cereibacter sphaeroides (strain ATCC 17029 / ATH 2.4.9) (Rhodobacter sphaeroides) protein is Large ribosomal subunit protein uL5.